A 475-amino-acid polypeptide reads, in one-letter code: Ankyrin repeat, SAM and basic leucine zipper domain-containing protein 1 (475 aa).

Residues 1-23 (MAAARFRGLAVAGGGESSESEDD) form a disordered region. 3 positions are modified to phosphoserine: serine 17, serine 18, and serine 20. 6 ANK repeats span residues 45 to 74 (EKNE…SVDS), 78 to 107 (YGWT…KASF), 110 to 144 (DKQT…DPNV), 148 to 177 (RLMT…EVNT), 181 to 210 (NGYT…NKML), and 214 to 243 (DGKT…PLEG). The 63-residue stretch at 272-334 (SYTAFGDLEI…KILAALKELE (63 aa)) folds into the SAM domain.

As to quaternary structure, interacts with DDX4, PIWIL1, RANBP9 and TDRD1.

It is found in the cytoplasm. In terms of biological role, plays a central role during spermatogenesis by repressing transposable elements and preventing their mobilization, which is essential for the germline integrity. Acts via the piRNA metabolic process, which mediates the repression of transposable elements during meiosis by forming complexes composed of piRNAs and Piwi proteins and governs the methylation and subsequent repression of transposons. Its association with pi-bodies suggests a participation in the primary piRNAs metabolic process. Required prior to the pachytene stage to facilitate the production of multiple types of piRNAs, including those associated with repeats involved in the regulation of retrotransposons. May act by mediating protein-protein interactions during germ cell maturation. The polypeptide is Ankyrin repeat, SAM and basic leucine zipper domain-containing protein 1 (ASZ1) (Equus caballus (Horse)).